A 326-amino-acid chain; its full sequence is Transformer-2 protein homolog (326 aa).

2 disordered regions span residues Met1–Val114 and Leu179–Arg326. Basic and acidic residues predominate over residues Arg38–Pro55. A compositionally biased stretch (low complexity) spans Pro56–Pro85. Positions Arg104 to Asn113 are enriched in polar residues. The 79-residue stretch at Asn113–Thr191 folds into the RRM domain. A compositionally biased stretch (gly residues) spans Tyr220–Asp239. Positions Arg240 to Arg326 are enriched in basic and acidic residues.

It belongs to the splicing factor SR family.

The protein localises to the nucleus. Functionally, sequence-specific RNA-binding protein which participates in the control of pre-mRNA splicing. This Dictyostelium discoideum (Social amoeba) protein is Transformer-2 protein homolog (tra2).